Here is a 218-residue protein sequence, read N- to C-terminus: Thiopurine S-methyltransferase (218 aa).

S-adenosyl-L-methionine contacts are provided by tryptophan 10, leucine 45, glutamate 66, and arginine 123.

Belongs to the class I-like SAM-binding methyltransferase superfamily. TPMT family.

The protein resides in the cytoplasm. It catalyses the reaction S-adenosyl-L-methionine + a thiopurine = S-adenosyl-L-homocysteine + a thiopurine S-methylether.. The protein is Thiopurine S-methyltransferase of Shewanella sp. (strain MR-7).